We begin with the raw amino-acid sequence, 58 residues long: UPF0391 membrane protein Sfri_4000 (58 aa).

Transmembrane regions (helical) follow at residues 6 to 26 (LMFL…IAGA) and 27 to 47 (AAGI…ISLV).

Belongs to the UPF0391 family.

It is found in the cell membrane. This Shewanella frigidimarina (strain NCIMB 400) protein is UPF0391 membrane protein Sfri_4000.